The chain runs to 251 residues: CDP-diacylglycerol pyrophosphatase (251 aa).

A helical membrane pass occupies residues 5–25; the sequence is GYFLLAVIVIVAAAGVGYWKF.

The protein belongs to the Cdh family.

It is found in the cell inner membrane. The catalysed reaction is a CDP-1,2-diacyl-sn-glycerol + H2O = a 1,2-diacyl-sn-glycero-3-phosphate + CMP + 2 H(+). It functions in the pathway phospholipid metabolism; CDP-diacylglycerol degradation; phosphatidate from CDP-diacylglycerol: step 1/1. The sequence is that of CDP-diacylglycerol pyrophosphatase from Salmonella typhi.